A 510-amino-acid chain; its full sequence is MDIRAAEISAILKDQIKNFGQEAEVTEVGQVLSVGDGIARVYGLDNVQAGEMVEFENGTRGMALNLETDNVGIVIFGADREIKEGQTVKRTRAIVDTPVGKGLLGRVVDALGNPIDGKGPIQSTERKRVDVKAPGIIPRKSVNEPMATGLKAIDALIPVGRGQRELIIGDRQTGKTAIALDTILNQKPLNVEGAPEGQKLYCVYVAIGQKRSTVAQFVKVLEEQGALEYSIVVAATASDPAPMQYIAPFTGCTMGEYFRDNGMHAVIIYDDLSKQAVAYRQMSLLLRRPPGREAYPGDVFYLHSRLLERAAKLNEDHGSGSLTALPIIETQANDVSAYIPTNVISITDGQIFLETDLFFQGIRPAVNVGLSVSRVGSSAQTKAMKKVAGKIKGELAQYREMAAFAQFGSDLDASTQRLLNRGSRLTELLKQPQFSPLKMEEQVVVIYAGVNGYLDPLPVSKVRAFEDGLLSLLRGKNVEILNTIRDSRDLSNETAAQLKSVVEGYAKTFA.

169–176 (GDRQTGKT) serves as a coordination point for ATP.

The protein belongs to the ATPase alpha/beta chains family. F-type ATPases have 2 components, CF(1) - the catalytic core - and CF(0) - the membrane proton channel. CF(1) has five subunits: alpha(3), beta(3), gamma(1), delta(1), epsilon(1). CF(0) has four main subunits: a(1), b(1), b'(1) and c(9-12).

The protein resides in the cell inner membrane. It catalyses the reaction ATP + H2O + 4 H(+)(in) = ADP + phosphate + 5 H(+)(out). Functionally, produces ATP from ADP in the presence of a proton gradient across the membrane. The alpha chain is a regulatory subunit. The protein is ATP synthase subunit alpha of Rhodopseudomonas palustris (strain BisB18).